A 397-amino-acid chain; its full sequence is Probable inactive purple acid phosphatase 28 (397 aa).

The N-terminal stretch at 1–30 (MNCSIGNWKHTVLYLTLIVSLLYFIESLIS) is a signal peptide. 2 N-linked (GlcNAc...) asparagine glycosylation sites follow: asparagine 91 and asparagine 209. Zn(2+) contacts are provided by histidine 266 and histidine 314. 314–316 (HDH) is a binding site for substrate. A Fe cation-binding site is contributed by histidine 316.

The protein belongs to the metallophosphoesterase superfamily. Purple acid phosphatase family. Homodimer. Fe cation is required as a cofactor. Zn(2+) serves as cofactor. As to expression, expressed in roots, stems, leaves, flowers and siliques.

The protein resides in the secreted. In Arabidopsis thaliana (Mouse-ear cress), this protein is Probable inactive purple acid phosphatase 28 (PAP28).